Here is an 873-residue protein sequence, read N- to C-terminus: DNA mismatch repair protein MutS (873 aa).

625–632 (GPNMGGKS) lines the ATP pocket.

This sequence belongs to the DNA mismatch repair MutS family.

In terms of biological role, this protein is involved in the repair of mismatches in DNA. It is possible that it carries out the mismatch recognition step. This protein has a weak ATPase activity. The protein is DNA mismatch repair protein MutS of Xanthomonas campestris pv. campestris (strain 8004).